The following is a 310-amino-acid chain: ADP-L-glycero-D-manno-heptose-6-epimerase (310 aa).

Residues phenylalanine 10–isoleucine 11, aspartate 31–asparagine 32, lysine 38, lysine 53, glutamate 75–serine 79, and asparagine 92 each bind NADP(+). Catalysis depends on tyrosine 140, which acts as the Proton acceptor. Lysine 144 contacts NADP(+). Asparagine 169 serves as a coordination point for substrate. The NADP(+) site is built by valine 170 and lysine 178. The active-site Proton acceptor is the lysine 178. Substrate is bound by residues serine 180, histidine 187, phenylalanine 201 to serine 204, and arginine 209. Lysine 267 carries the N6-acetyllysine modification. A substrate-binding site is contributed by tyrosine 272.

The protein belongs to the NAD(P)-dependent epimerase/dehydratase family. HldD subfamily. In terms of assembly, homopentamer. It depends on NADP(+) as a cofactor.

It catalyses the reaction ADP-D-glycero-beta-D-manno-heptose = ADP-L-glycero-beta-D-manno-heptose. It functions in the pathway nucleotide-sugar biosynthesis; ADP-L-glycero-beta-D-manno-heptose biosynthesis; ADP-L-glycero-beta-D-manno-heptose from D-glycero-beta-D-manno-heptose 7-phosphate: step 4/4. Functionally, catalyzes the interconversion between ADP-D-glycero-beta-D-manno-heptose and ADP-L-glycero-beta-D-manno-heptose via an epimerization at carbon 6 of the heptose. This Escherichia coli (strain ATCC 8739 / DSM 1576 / NBRC 3972 / NCIMB 8545 / WDCM 00012 / Crooks) protein is ADP-L-glycero-D-manno-heptose-6-epimerase.